Reading from the N-terminus, the 265-residue chain is Small ribosomal subunit protein uS5 (265 aa).

The segment covering 1 to 25 (MADTTTAAQADQKPTRAFGAGRPQR) has biased composition (low complexity). The segment at 1–49 (MADTTTAAQADQKPTRAFGAGRPQRGAGGAPQRGGPRPQRGGQGETKSW) is disordered. Ala2 is subject to N-acetylalanine. The S5 DRBM domain maps to 89–152 (LKDEVMKIVP…VAAKLSVIPV (64 aa)).

This sequence belongs to the universal ribosomal protein uS5 family.

Its function is as follows. Component of the ribosome, a large ribonucleoprotein complex responsible for the synthesis of proteins in the cell. The small ribosomal subunit (SSU) binds messenger RNAs (mRNAs) and translates the encoded message by selecting cognate aminoacyl-transfer RNA (tRNA) molecules. The large subunit (LSU) contains the ribosomal catalytic site termed the peptidyl transferase center (PTC), which catalyzes the formation of peptide bonds, thereby polymerizing the amino acids delivered by tRNAs into a polypeptide chain. The nascent polypeptides leave the ribosome through a tunnel in the LSU and interact with protein factors that function in enzymatic processing, targeting, and the membrane insertion of nascent chains at the exit of the ribosomal tunnel. Plays a role in the assembly and function of the 40S ribosomal subunit. Mutations in this protein affects the control of translational fidelity. Involved in nucleolar processing of pre-18S ribosomal RNA and ribosome assembly. This Dictyostelium discoideum (Social amoeba) protein is Small ribosomal subunit protein uS5 (rps2).